Consider the following 440-residue polypeptide: NADH-quinone oxidoreductase subunit D 1 (440 aa).

It belongs to the complex I 49 kDa subunit family. NDH-1 is composed of 14 different subunits. Subunits NuoB, C, D, E, F, and G constitute the peripheral sector of the complex.

Its subcellular location is the cell inner membrane. It catalyses the reaction a quinone + NADH + 5 H(+)(in) = a quinol + NAD(+) + 4 H(+)(out). NDH-1 shuttles electrons from NADH, via FMN and iron-sulfur (Fe-S) centers, to quinones in the respiratory chain. The immediate electron acceptor for the enzyme in this species is believed to be a menaquinone. Couples the redox reaction to proton translocation (for every two electrons transferred, four hydrogen ions are translocated across the cytoplasmic membrane), and thus conserves the redox energy in a proton gradient. The protein is NADH-quinone oxidoreductase subunit D 1 of Chloroherpeton thalassium (strain ATCC 35110 / GB-78).